The sequence spans 178 residues: Small ribosomal subunit protein uS4 (178 aa).

The S4 RNA-binding domain occupies 104 to 166 (RRLQTIVYRK…PNSPMASENH (63 aa)). The segment at 158–178 (NSPMASENHPERTAAVSEENQ) is disordered.

This sequence belongs to the universal ribosomal protein uS4 family. As to quaternary structure, part of the 30S ribosomal subunit. Contacts protein S5. The interaction surface between S4 and S5 is involved in control of translational fidelity.

Functionally, one of the primary rRNA binding proteins, it binds directly to 16S rRNA where it nucleates assembly of the body of the 30S subunit. Its function is as follows. With S5 and S12 plays an important role in translational accuracy. The sequence is that of Small ribosomal subunit protein uS4 from Methanococcus maripaludis (strain C6 / ATCC BAA-1332).